The chain runs to 347 residues: NADH-ubiquinone oxidoreductase chain 2 (347 aa).

10 helical membrane-spanning segments follow: residues 3–23 (PPIL…VMLS), 25–45 (HWLL…PILM), 66–86 (ASML…QWVI), 93–115 (IASI…HFWV), 149–169 (INTN…GWGG), 178–198 (IMAY…TYNP), 201–221 (MILN…LFML), 237–257 (FPLI…LPPL), 274–294 (NMII…YFYL), and 325–345 (LLPP…MLSV).

Belongs to the complex I subunit 2 family. As to quaternary structure, core subunit of respiratory chain NADH dehydrogenase (Complex I) which is composed of 45 different subunits. Interacts with TMEM242.

The protein localises to the mitochondrion inner membrane. It carries out the reaction a ubiquinone + NADH + 5 H(+)(in) = a ubiquinol + NAD(+) + 4 H(+)(out). In terms of biological role, core subunit of the mitochondrial membrane respiratory chain NADH dehydrogenase (Complex I) which catalyzes electron transfer from NADH through the respiratory chain, using ubiquinone as an electron acceptor. Essential for the catalytic activity and assembly of complex I. This is NADH-ubiquinone oxidoreductase chain 2 from Canis lupus (Gray wolf).